A 245-amino-acid polypeptide reads, in one-letter code: DNA repair protein RecO (245 aa).

This sequence belongs to the RecO family.

Its function is as follows. Involved in DNA repair and RecF pathway recombination. This chain is DNA repair protein RecO, found in Anaplasma phagocytophilum (strain HZ).